Here is a 111-residue protein sequence, read N- to C-terminus: Large ribosomal subunit protein eL42 (111 aa).

Zn(2+) contacts are provided by Cys12, Cys15, Cys72, and Cys77.

This sequence belongs to the eukaryotic ribosomal protein eL42 family. Component of the large ribosomal subunit.

Its subcellular location is the cytoplasm. Functionally, component of the large ribosomal subunit. The ribosome is a large ribonucleoprotein complex responsible for the synthesis of proteins in the cell. The sequence is that of Large ribosomal subunit protein eL42 (RPL36A) from Oryctolagus cuniculus (Rabbit).